The sequence spans 815 residues: Phenylalanine--tRNA ligase beta subunit (815 aa).

The region spanning 39-148 (ATELQKFEVA…EYAVVGDNFT (110 aa)) is the tRNA-binding domain. In terms of domain architecture, B5 spans 420–495 (LQKIPLDFSV…RIYGYDKIES (76 aa)). Mg(2+)-binding residues include aspartate 473, aspartate 479, glutamate 482, and glutamate 483. The 94-residue stretch at 721–814 (SDFQANFRDY…ISQKFQGTLR (94 aa)) folds into the FDX-ACB domain.

This sequence belongs to the phenylalanyl-tRNA synthetase beta subunit family. Type 1 subfamily. Tetramer of two alpha and two beta subunits. Mg(2+) is required as a cofactor.

Its subcellular location is the cytoplasm. It catalyses the reaction tRNA(Phe) + L-phenylalanine + ATP = L-phenylalanyl-tRNA(Phe) + AMP + diphosphate + H(+). The sequence is that of Phenylalanine--tRNA ligase beta subunit from Rickettsia typhi (strain ATCC VR-144 / Wilmington).